Reading from the N-terminus, the 1588-residue chain is MSWKRNYFSGGRGSVQGMFAPRSSMSIAPSKGLSNEPGQNSCFLNSALQVLWHLDIFRRSFRQLTSHKCMGDSCIFCALKGIFKQFQCSSEKVLPSDTLRSALAKTFQDEQRFQLGIMDDAAECFENLLMRIHFHIADETKEDICTAPHCISHQKFAMTLFEQCVCTSCGATSDPLPFIQMVHYISTTSLCNQAICMLEKREKPSPGMFGELLQNASTMGDLRDCPSNCGERIRIRRVLMNAPQIITIGLVWDSDHSDLAEDVIHSLGTCLKLGDLFFRVTDDRAKQSELYLVGMICYYGKHYSTFFFQTKIRKWMYFDDAHVKEIGPKWKDVVTKCIKGHYQPLLLLYADPQGTPVSAQDLPPHAQLLSHTKTCYDSEDSGHLTDSECNQKHTTKKGPLVERRRGSGRIRRKADAPQASGYHSEGETLKEKQAPRNASKSSSTSRLKDFKETVSNMIHSRPSLASQTNAASPCVGRAGDQPDKIPARNLPLHSRGWETESTSSEARSSSSSKYRPTWRPKRESLNIDSIFSKDKRKHCGYTQLKTFPEDAAKEFAQDEVSNPVANDIKDGGPSSQHKLWGTARPGSHLLEQHPRLIQRMESGYESSERNSSSPVSLDAAPPECLNVYRDQSTKRAVGFVPSWRHIPKSHSSSILEVDSTAPVTGWTETQPFSDGEITSKSELDELQEEVARRAQEQELRKKREKELEAAKGFNPHPSRYMDLDELQNQGRSDGFERSLQEANSVFEESLHLEQEGDCAAALALCNEAISKLRLTLHDASSSTHSRALVDKKLQISIRKARSLQDRMQQQPPSQQPVQPSASLPSQGGGLPQPTSEQSVPLQVLLSQQTQLEPCKDSELGATSPFFHSPASCPEPHSSLVSPSPAQSVSQHSPPGTSALKLLKSFEVDIVNHSAFHRQDLPKATGRTEMNSQHECLPFDALEDRLQGHREDNSCCSKFPPQEGRDTTQDQLLEGRKTPVDISMGMPWSHSAGGATSERVMHSLNSPSSPSAQPAVPPYGACHPIMSAAASPVLHAADPMQKLNQHLQAQSLQTSLASKVVRGSEEPYRPEFPSTKGLVRSLAEQFQKIRNTSTRDVIGSQDRSLPNGLRKSSSPSDFMLPLSQGPEKEHCRWVNQPPSPDGRERQPCWEEPAGHPSVSIDSGLPNGEASRRRQPRLAEADIYQGKLPQVTDTRPTELGSSVSLGTSLPLDSWVNVTRLCDSQVKHRAPGLGVKSSSHDSRTCVTYPERNPILLHPHWNQDTEQETSELESLYQASLQASSHTGYSDWRSQDVAWQPLSLTGSADGMGRRLHSAPGLDLSKTPTAEMERILYEPSTVPVSQDSSNVRKKTLETGHHCSSSSSLPVIHDPPVFLLDPKLYPPQPQFLSPDVLMPSMAGEPYRSPGTSRSVQQFLAMCDRDETPQGVKYTGRTLNYRSLPHRSRTDASWGPGTETNQHIGARVLTAPACKPQLTYTATLPERHQGLQVPHAQSWGNLFHLPSHPSAVHPGSPPSSSLHVLHRSSWNSGSVLGSRTPGPRRIDVPPDDDGRQSQYPSQYRHRSAGEERVRFALSNTAGTEQSRVRLLQHSRW.

Position 12 is an omega-N-methylarginine (R12). One can recognise a USP domain in the interval 31-352 (KGLSNEPGQN…QPLLLLYADP (322 aa)). Residue C42 is the Nucleophile of the active site. Zn(2+) is bound by residues H67, C69, C74, C77, H133, C145, C150, H153, C166, C169, C225, and C229. H302 (proton acceptor) is an active-site residue. Basic and acidic residues-rich tracts occupy residues 380 to 391 (DSGHLTDSECNQ) and 424 to 434 (SEGETLKEKQA). Disordered stretches follow at residues 380–447 (DSGH…TSRL) and 459–519 (HSRP…PTWR). The residue at position 424 (S424) is a Phosphoserine. Polar residues-rich tracts occupy residues 436–445 (RNASKSSSTS) and 459–471 (HSRP…TNAA). Residues 499 to 512 (TESTSSEARSSSSS) are compositionally biased toward low complexity. 3 positions are modified to phosphoserine: S574, S613, and S616. The span at 601–616 (ESGYESSERNSSSPVS) shows a compositional bias: low complexity. The tract at residues 601–620 (ESGYESSERNSSSPVSLDAA) is disordered. A coiled-coil region spans residues 678–712 (TSKSELDELQEEVARRAQEQELRKKREKELEAAKG). Disordered regions lie at residues 801-839 (RSLQ…EQSV), 856-895 (DSEL…SPPG), 950-969 (EDNS…TTQD), 1093-1172 (TRDV…SRRR), and 1525-1562 (GSVL…SAGE). Residues 808–825 (QQQPPSQQPVQPSASLPS) are compositionally biased toward low complexity. The span at 878 to 895 (SLVSPSPAQSVSQHSPPG) shows a compositional bias: polar residues. Phosphoserine is present on S1138. Over residues 1536-1547 (RRIDVPPDDDGR) the composition is skewed to basic and acidic residues.

Belongs to the peptidase C19 family.

It carries out the reaction Thiol-dependent hydrolysis of ester, thioester, amide, peptide and isopeptide bonds formed by the C-terminal Gly of ubiquitin (a 76-residue protein attached to proteins as an intracellular targeting signal).. Functionally, deubiquitinase that specifically mediates 'Lys-63'-linked deubiquitination of substrates with a polyubiquitin chain composed of at least 3 ubiquitins. Specifically recognizes ubiquitin chain in position S2 and catalyzes cleavage of polyubiquitin within 'Lys-63'-linked chains. Not able to deubiquitinate substrates with shorter ubiquitin chains. Mediates deubiquitination of PLK4, maintaining PLK4 stability by reducing its ubiquitination-mediated degradation. In Rattus norvegicus (Rat), this protein is Ubiquitin carboxyl-terminal hydrolase 54 (Usp54).